We begin with the raw amino-acid sequence, 347 residues long: Phenylalanine--tRNA ligase alpha subunit (347 aa).

Mg(2+) is bound at residue Glu-261.

The protein belongs to the class-II aminoacyl-tRNA synthetase family. Phe-tRNA synthetase alpha subunit type 1 subfamily. In terms of assembly, tetramer of two alpha and two beta subunits. Mg(2+) serves as cofactor.

The protein resides in the cytoplasm. The enzyme catalyses tRNA(Phe) + L-phenylalanine + ATP = L-phenylalanyl-tRNA(Phe) + AMP + diphosphate + H(+). This is Phenylalanine--tRNA ligase alpha subunit from Streptococcus equi subsp. zooepidemicus (strain MGCS10565).